We begin with the raw amino-acid sequence, 930 residues long: G patch domain-containing protein TGH (930 aa).

Lys25 participates in a covalent cross-link: Glycyl lysine isopeptide (Lys-Gly) (interchain with G-Cter in ubiquitin). A disordered region spans residues 76 to 152; the sequence is GWAPQSFTSS…PSAIPGPVPD (77 aa). The 41-residue stretch at 159–199 folds into the G-patch domain; that stretch reads SESIGVKLLLKMGWRRGHSIKEVRASSDARREARKAFLAFY. Residues 405–447 form an SURP motif repeat; it reads LIEGFATFVSRCGKLYEDLSREKNQSNQLFDFLREGNGHDYYA. Disordered stretches follow at residues 478–508, 687–751, and 773–930; these read AETR…GSFQ, RQVS…NEAA, and FEVP…RRRD. The segment covering 489-498 has biased composition (basic and acidic residues); that stretch reads PLQRSLKETD. The span at 499-508 shows a compositional bias: polar residues; it reads TSASSGGSFQ. Acidic residues predominate over residues 701–711; that stretch reads IEEPEVEVEVE. Over residues 779–808 the composition is skewed to basic and acidic residues; it reads EEIKSRSKPEDSSDKRLDRPGLKEKVEEKT. Over residues 848–857 the composition is skewed to basic residues; that stretch reads RRKRYNKKDR. Positions 858–877 are enriched in basic and acidic residues; that stretch reads HRNDSESDSSSDYHSRDKQG. Basic residues predominate over residues 892–908; that stretch reads RSSHKKHSKHRRTKKSS. Over residues 913–923 the composition is skewed to basic and acidic residues; it reads SSDEEQKESRR.

As to expression, expressed in vasculature of cotyledons and leaves, young meristematic tissues, trichomes and pistils.

Its subcellular location is the nucleus speckle. It is found in the nucleus. The protein localises to the nucleoplasm. In terms of biological role, functions as a component of microRNA (miRNA) and small interfering RNA (siRNA) biogenesis. May assist DCL1 and DCL4 to efficiently process and/or recruit the precursors of miRNAs and siRNAs. In the miRNA biogenesis pathway, associates with the DCL1 complex that processes primary miRNAs (pri-miRNAs) into miRNAs. Binds pri-miRNAs and precursor miRNAs (pre-miRNAs). Is required for the interaction between pri-miRNAs and DRB1. Required for general proper plant growth and, in particular, initiation of vascular development. Interacts genetically with AMP1, a glutamate carboxypeptidase involved in the regulation of meristem function. The chain is G patch domain-containing protein TGH from Arabidopsis thaliana (Mouse-ear cress).